The following is a 218-amino-acid chain: UPF0598 protein C8orf82 homolog (218 aa).

The protein belongs to the UPF0598 family.

The chain is UPF0598 protein C8orf82 homolog from Bos taurus (Bovine).